We begin with the raw amino-acid sequence, 221 residues long: MKCLFLLCLCLFPIVVFSSTFTSQNPINLPSDATPVLDVTGKELDPRLSYHIISTFWGALGGDVYLGKSPNSDAPCANGIFRYNSDVGPSGTPVRFIGSSSHFGQGIFENELLNIQFAISTSKLCVSYTIWKVGDYDASLGTMLLETGGTIGQADSSWFKIVQSSQFGYNLLYCPVTSTMSCPFSSDDQFCLKVGVVHQNGKRRLALVKDNPLDVSFKQVQ.

The first 22 residues, 1 to 22 (MKCLFLLCLCLFPIVVFSSTFT), serve as a signal peptide directing secretion. A propeptide spanning residues 23-28 (SQNPIN) is cleaved from the precursor. The short motif at 25–30 (NPINLP) is the Vacuolar targeting signal element. 2 disulfide bridges follow: cysteine 76–cysteine 125 and cysteine 174–cysteine 191.

It belongs to the protease inhibitor I3 (leguminous Kunitz-type inhibitor) family.

It is found in the vacuole. Its function is as follows. Inhibitor of trypsin (serine protease). May protect the plant by inhibiting proteases of invading organisms. This chain is Probable serine protease inhibitor 6, found in Solanum tuberosum (Potato).